The following is a 376-amino-acid chain: N-acetyldiaminopimelate deacetylase (376 aa).

D69 is a catalytic residue. The active-site Proton acceptor is the E128.

The protein belongs to the peptidase M20A family. N-acetyldiaminopimelate deacetylase subfamily.

The enzyme catalyses N-acetyl-(2S,6S)-2,6-diaminopimelate + H2O = (2S,6S)-2,6-diaminopimelate + acetate. It functions in the pathway amino-acid biosynthesis; L-lysine biosynthesis via DAP pathway; LL-2,6-diaminopimelate from (S)-tetrahydrodipicolinate (acetylase route): step 3/3. Functionally, catalyzes the conversion of N-acetyl-diaminopimelate to diaminopimelate and acetate. The chain is N-acetyldiaminopimelate deacetylase from Bacillus cereus (strain 03BB102).